Reading from the N-terminus, the 226-residue chain is Biosynthetic peptidoglycan transglycosylase (226 aa).

The helical transmembrane segment at 7–29 (VMALSAIGLLLLPYLLTPLYRIG) threads the bilayer.

It belongs to the glycosyltransferase 51 family.

Its subcellular location is the cell inner membrane. The enzyme catalyses [GlcNAc-(1-&gt;4)-Mur2Ac(oyl-L-Ala-gamma-D-Glu-L-Lys-D-Ala-D-Ala)](n)-di-trans,octa-cis-undecaprenyl diphosphate + beta-D-GlcNAc-(1-&gt;4)-Mur2Ac(oyl-L-Ala-gamma-D-Glu-L-Lys-D-Ala-D-Ala)-di-trans,octa-cis-undecaprenyl diphosphate = [GlcNAc-(1-&gt;4)-Mur2Ac(oyl-L-Ala-gamma-D-Glu-L-Lys-D-Ala-D-Ala)](n+1)-di-trans,octa-cis-undecaprenyl diphosphate + di-trans,octa-cis-undecaprenyl diphosphate + H(+). Its pathway is cell wall biogenesis; peptidoglycan biosynthesis. In terms of biological role, peptidoglycan polymerase that catalyzes glycan chain elongation from lipid-linked precursors. The sequence is that of Biosynthetic peptidoglycan transglycosylase from Nitrobacter winogradskyi (strain ATCC 25391 / DSM 10237 / CIP 104748 / NCIMB 11846 / Nb-255).